The sequence spans 1027 residues: C2 and GRAM domain-containing protein At5g50170 (1027 aa).

In terms of domain architecture, C2 1 spans 1–103 (MRLYVYILQA…ENQTLLPTWF (103 aa)). Residues 158–167 (SPKDLISSRD) show a composition bias toward basic and acidic residues. 2 disordered regions span residues 158 to 177 (SPKD…HDGK) and 201 to 223 (LHDE…DQCS). Residues 168–177 (GKRRKHHDGK) are compositionally biased toward basic residues. Residues 206 to 223 (SVGQSVNSNYEDATDQCS) show a composition bias toward polar residues. Positions 253–426 (TGGVLVDQKY…LLAKTYKTLD (174 aa)) constitute a VASt 1 domain. The chain crosses the membrane as a helical span at residues 452–472 (FLYFWSSSVICAVLLSVYVVV). Residues 516-639 (TVHFVQARLH…TADELADLSV (124 aa)) form the C2 2 domain. Positions 693–756 (AFQKLFGLPH…LWEDIDDIQV (64 aa)) constitute a GRAM domain. One can recognise a VASt 2 domain in the interval 855 to 1018 (MMSKVYTCDL…VIFDLFQKES (164 aa)).

It localises to the membrane. The chain is C2 and GRAM domain-containing protein At5g50170 from Arabidopsis thaliana (Mouse-ear cress).